The primary structure comprises 295 residues: MTNVTGTERVKRGMAEMQKGGVIMDVVNAEQAKIAEEAGAVAVMALERVPADIRAAGGVSRMADPTIVEEVMGAVSIPVMAKCRIGHLVEARVLESLGVDYIDESEVLTPADEVYHLNKRDYTVPFVCGCRDIGEAARRIAEGASMLRTKGEPGTGNIVEAVRHMRQVNAEIRQVASLREDELMTYAKNTGAPYEVLLEIKRLGRLPVVNFAAGGVATPADAALMMQLGADGVFVGSGIFKSENPEKFARAIVEATTHYEDYELIASLSKGLGNAMKGVEISTLLPEQRMQERGW.

Residue Asp25 coordinates D-ribose 5-phosphate. The active-site Schiff-base intermediate with D-ribose 5-phosphate is Lys82. Gly154 serves as a coordination point for D-ribose 5-phosphate. Arg166 is a binding site for D-glyceraldehyde 3-phosphate. Residues Gly215 and 236 to 237 each bind D-ribose 5-phosphate; that span reads GS.

This sequence belongs to the PdxS/SNZ family. In the presence of PdxT, forms a dodecamer of heterodimers.

It carries out the reaction aldehydo-D-ribose 5-phosphate + D-glyceraldehyde 3-phosphate + L-glutamine = pyridoxal 5'-phosphate + L-glutamate + phosphate + 3 H2O + H(+). Its pathway is cofactor biosynthesis; pyridoxal 5'-phosphate biosynthesis. Its function is as follows. Catalyzes the formation of pyridoxal 5'-phosphate from ribose 5-phosphate (RBP), glyceraldehyde 3-phosphate (G3P) and ammonia. The ammonia is provided by the PdxT subunit. Can also use ribulose 5-phosphate and dihydroxyacetone phosphate as substrates, resulting from enzyme-catalyzed isomerization of RBP and G3P, respectively. This chain is Pyridoxal 5'-phosphate synthase subunit PdxS, found in Bacillus cereus (strain B4264).